Reading from the N-terminus, the 255-residue chain is D-aminoacyl-tRNA deacylase (255 aa).

It belongs to the DtdA deacylase family. Monomer. The cofactor is Zn(2+).

It catalyses the reaction a D-aminoacyl-tRNA + H2O = a tRNA + a D-alpha-amino acid + H(+). The enzyme catalyses glycyl-tRNA(Ala) + H2O = tRNA(Ala) + glycine + H(+). D-aminoacyl-tRNA deacylase with broad substrate specificity. By recycling D-aminoacyl-tRNA to D-amino acids and free tRNA molecules, this enzyme counteracts the toxicity associated with the formation of D-aminoacyl-tRNA entities in vivo. In Methanocaldococcus jannaschii (strain ATCC 43067 / DSM 2661 / JAL-1 / JCM 10045 / NBRC 100440) (Methanococcus jannaschii), this protein is D-aminoacyl-tRNA deacylase.